A 336-amino-acid chain; its full sequence is Foldase protein PrsA (336 aa).

Positions 1 to 22 (MKSAKKLLSVLCLGIFILTFTA) are cleaved as a signal peptide. A lipid anchor (N-palmitoyl cysteine) is attached at Cys23. Residue Cys23 is the site of S-diacylglycerol cysteine attachment. The 93-residue stretch at 194 to 286 (PNTMNVSHIL…FGYHIIKINS (93 aa)) folds into the PpiC domain.

It belongs to the PrsA family.

Its subcellular location is the cell membrane. The enzyme catalyses [protein]-peptidylproline (omega=180) = [protein]-peptidylproline (omega=0). Functionally, plays a major role in protein secretion by helping the post-translocational extracellular folding of several secreted proteins. In Clostridium botulinum (strain Kyoto / Type A2), this protein is Foldase protein PrsA.